Reading from the N-terminus, the 349-residue chain is NADH-ubiquinone oxidoreductase chain 2 (349 aa).

Transmembrane regions (helical) follow at residues 3 to 23 (PYVL…TFAS), 25 to 45 (HWLL…PIMA), 66 to 86 (AAAM…EWEI), 98 to 118 (VMLA…LPEV), 149 to 171 (INSS…GGLN), 178 to 197 (ILAY…LQYA), 202 to 219 (LLSL…FLTL), 240 to 260 (LAAL…LSGF), 274 to 294 (GLPL…YFYL), and 319 to 339 (FTLI…LLPL).

The protein belongs to the complex I subunit 2 family.

The protein localises to the mitochondrion inner membrane. It catalyses the reaction a ubiquinone + NADH + 5 H(+)(in) = a ubiquinol + NAD(+) + 4 H(+)(out). Its function is as follows. Core subunit of the mitochondrial membrane respiratory chain NADH dehydrogenase (Complex I) that is believed to belong to the minimal assembly required for catalysis. Complex I functions in the transfer of electrons from NADH to the respiratory chain. The immediate electron acceptor for the enzyme is believed to be ubiquinone. The sequence is that of NADH-ubiquinone oxidoreductase chain 2 (MT-ND2) from Salmo salar (Atlantic salmon).